Reading from the N-terminus, the 201-residue chain is Small ribosomal subunit protein uS4c (201 aa).

The S4 RNA-binding domain occupies Met-89–Leu-152.

It belongs to the universal ribosomal protein uS4 family. Part of the 30S ribosomal subunit. Contacts protein S5. The interaction surface between S4 and S5 is involved in control of translational fidelity.

The protein localises to the plastid. It localises to the chloroplast. One of the primary rRNA binding proteins, it binds directly to 16S rRNA where it nucleates assembly of the body of the 30S subunit. In terms of biological role, with S5 and S12 plays an important role in translational accuracy. The chain is Small ribosomal subunit protein uS4c (rps4) from Arabidopsis thaliana (Mouse-ear cress).